Here is a 341-residue protein sequence, read N- to C-terminus: Delta(1)-pyrroline-2-carboxylate/Delta(1)-piperideine-2-carboxylate reductase (341 aa).

Residue serine 52 is the Charge relay system of the active site. Catalysis depends on histidine 53, which acts as the Proton donor. Arginine 57 lines the substrate pocket. 125-129 (HFAAL) lines the NADP(+) pocket. Threonine 165 contributes to the substrate binding site. Residue 183–185 (DMA) participates in NADP(+) binding. 191-192 (HG) contributes to the substrate binding site. Aspartate 193 acts as the Charge relay system in catalysis. NADP(+)-binding positions include 235 to 236 (HK) and 308 to 314 (RMPGERR).

This sequence belongs to the LDH2/MDH2 oxidoreductase family. As to quaternary structure, homodimer.

The catalysed reaction is L-pipecolate + NADP(+) = Delta(1)-piperideine-2-carboxylate + NADPH + H(+). It catalyses the reaction L-proline + NADP(+) = 1-pyrroline-2-carboxylate + NADPH + H(+). It carries out the reaction N-methyl-L-alanine + NADP(+) + H2O = methylamine + pyruvate + NADPH + H(+). Its activity is regulated as follows. Is inhibited by the substrate analog pyrrole-2-carboxylate, but not by N-formylphenylalanine. In terms of biological role, catalyzes the reduction of both Delta(1)-pyrroline-2-carboxylate (Pyr2C) and Delta(1)-piperideine-2-carboxylate (Pip2C) to L-proline and L-pipecolate, respectively, using NADPH as the electron donor. Can use NADH instead of NADPH, although with much less efficiency. Plays an essential role in the catabolism of D-proline and D-lysine, which allows P.putida to grow on each of these amino-acids as a sole carbon source; D-lysine appears to be catabolized only through the pipecolate pathway. Can also catalyze the reverse oxidation reactions, albeit at a much lower rate. To a lesser extent, is able to catalyze in vitro the NADPH-dependent formation of N-alkyl-L-amino acids from the corresponding alpha-oxo acids and alkylamines, e.g. the formation of N-methylalanine from pyruvate and N-methylamine; cannot use ammonia as substrate for these reductive amination reactions. Shows neither malate dehydrogenase nor lactate dehydrogenase activity. The protein is Delta(1)-pyrroline-2-carboxylate/Delta(1)-piperideine-2-carboxylate reductase of Pseudomonas putida (Arthrobacter siderocapsulatus).